A 297-amino-acid polypeptide reads, in one-letter code: IMPACT family member C14C8.09c (297 aa).

Residues 225 to 255 adopt a coiled-coil conformation; sequence LRSELQEKNQKDKKKEVNKLEEKMTNAKEPN. Basic and acidic residues-rich tracts occupy residues 228–250 and 280–297; these read ELQEKNQKDKKKEVNKLEEKMTN and SVDHKEASKIIKDVEKEE. A disordered region spans residues 228–297; that stretch reads ELQEKNQKDK…KIIKDVEKEE (70 aa).

Belongs to the IMPACT family.

The polypeptide is IMPACT family member C14C8.09c (Schizosaccharomyces pombe (strain 972 / ATCC 24843) (Fission yeast)).